Consider the following 338-residue polypeptide: MTKISALGAGSWGSVLASMLADNGHEVALYAHRQVIADEINQDHTNLHYMKDWTLNPSVWASTDMGQVLKDCDVILFAVPTSAIRSVAKAVRQVLDENGRQPYLVSATKGIESGTKKLVLQIFKDEIYPDGFDKMIVLSGPSHAENTAQKDLTAITLASTSLDNAAKMQKIFSNDYVRFYTSNDPIGVQVGGAVKNVIAIAAGILAGLGYGDNAKAALMTRGLAEITRLGVAFGGQPWTFSGLSGIGDLIVTCTSVNSRNWRCGYQLGQGKPLDEVLANMGQVVEGATTVKAVYEICDKYSLDMPISASIYKVLYEGAKIDDEIKLMMSRQLGPEIRI.

5 residues coordinate NADPH: serine 11, tryptophan 12, histidine 32, arginine 33, and lysine 109. 3 residues coordinate sn-glycerol 3-phosphate: lysine 109, glycine 140, and serine 142. Alanine 144 is an NADPH binding site. Lysine 195, aspartate 248, serine 258, arginine 259, and asparagine 260 together coordinate sn-glycerol 3-phosphate. The active-site Proton acceptor is lysine 195. Arginine 259 provides a ligand contact to NADPH. 2 residues coordinate NADPH: valine 283 and glutamate 285.

The protein belongs to the NAD-dependent glycerol-3-phosphate dehydrogenase family.

The protein localises to the cytoplasm. The enzyme catalyses sn-glycerol 3-phosphate + NAD(+) = dihydroxyacetone phosphate + NADH + H(+). It catalyses the reaction sn-glycerol 3-phosphate + NADP(+) = dihydroxyacetone phosphate + NADPH + H(+). It functions in the pathway membrane lipid metabolism; glycerophospholipid metabolism. In terms of biological role, catalyzes the reduction of the glycolytic intermediate dihydroxyacetone phosphate (DHAP) to sn-glycerol 3-phosphate (G3P), the key precursor for phospholipid synthesis. In Lactobacillus delbrueckii subsp. bulgaricus (strain ATCC 11842 / DSM 20081 / BCRC 10696 / JCM 1002 / NBRC 13953 / NCIMB 11778 / NCTC 12712 / WDCM 00102 / Lb 14), this protein is Glycerol-3-phosphate dehydrogenase [NAD(P)+] 1.